Here is a 209-residue protein sequence, read N- to C-terminus: tRNA (guanine-N(7)-)-methyltransferase (209 aa).

Residues aspartate 35, glutamate 60, asparagine 87, and aspartate 113 each contribute to the S-adenosyl-L-methionine site. Aspartate 113 is a catalytic residue. 2 residues coordinate substrate: lysine 117 and aspartate 149.

The protein belongs to the class I-like SAM-binding methyltransferase superfamily. TrmB family.

It catalyses the reaction guanosine(46) in tRNA + S-adenosyl-L-methionine = N(7)-methylguanosine(46) in tRNA + S-adenosyl-L-homocysteine. The protein operates within tRNA modification; N(7)-methylguanine-tRNA biosynthesis. In terms of biological role, catalyzes the formation of N(7)-methylguanine at position 46 (m7G46) in tRNA. The polypeptide is tRNA (guanine-N(7)-)-methyltransferase (Prochlorococcus marinus (strain AS9601)).